Reading from the N-terminus, the 188-residue chain is dCTP deaminase (188 aa).

Residues 111–116, 135–137, glutamine 156, tyrosine 170, and glutamine 180 contribute to the dCTP site; these read KSTYAR and TLE. The active-site Proton donor/acceptor is glutamate 137.

It belongs to the dCTP deaminase family. Homotrimer.

The catalysed reaction is dCTP + H2O + H(+) = dUTP + NH4(+). It participates in pyrimidine metabolism; dUMP biosynthesis; dUMP from dCTP (dUTP route): step 1/2. Catalyzes the deamination of dCTP to dUTP. This is dCTP deaminase from Acidovorax sp. (strain JS42).